The primary structure comprises 158 residues: GTP-dependent dephospho-CoA kinase (158 aa).

The GTP site is built by aspartate 35, valine 36, aspartate 54, lysine 56, glutamate 109, and aspartate 132.

This sequence belongs to the GTP-dependent DPCK family.

The enzyme catalyses 3'-dephospho-CoA + GTP = GDP + CoA + H(+). Its pathway is cofactor biosynthesis; coenzyme A biosynthesis. In terms of biological role, catalyzes the GTP-dependent phosphorylation of the 3'-hydroxyl group of dephosphocoenzyme A to form coenzyme A (CoA). The polypeptide is GTP-dependent dephospho-CoA kinase (Methanococcus vannielii (strain ATCC 35089 / DSM 1224 / JCM 13029 / OCM 148 / SB)).